Reading from the N-terminus, the 374-residue chain is Fatty acid conjugase FAC2 A (374 aa).

Helical transmembrane passes span 50 to 70 and 74 to 94; these read IIVTCILFYVASNYIPMLPGF and IVWPVYWISQGVFLGRLWMIG. The Histidine box-1 signature appears at 95 to 99; sequence HECGH. Residues 131 to 135 carry the Histidine box-2 motif; it reads HRNHH. A run of 3 helical transmembrane segments spans residues 168 to 188, 219 to 239, and 246 to 266; these read MGLMITMLCKLTFGYAAYIMF, VLFSDVGICIVLYACYRIVMV, and FYVYGIPWVIMSAILFAATYL. The short motif at 306–310 is the Histidine box-3 element; it reads HVIHH.

It belongs to the fatty acid desaturase type 1 family. As to expression, expressed exclusively in the developing seeds. Not detected in leaves or flower buds.

The protein localises to the microsome membrane. It carries out the reaction a (9Z,12Z)-octadecadienoyl-containing glycerolipid + AH2 + O2 = a (8E,10E,12Z)-octadecatrienoyl-containing glycerolipid + A + 2 H2O. The protein operates within lipid metabolism; polyunsaturated fatty acid biosynthesis. Its function is as follows. Fatty acid conjugase converting 18:2(9Z, 12Z) to calendic acid 18:3(8E, 10E, 12Z). Converts alpha-linolenic acid (18:3(9Z, 12Z, 15Z)) into 18:4(8E, 10E, 12Z, 15Z). Also has weak activity on the mono-unsaturates 16:1(9Z) and 18:1(9Z) producing two conjugated double bonds at delta(8) and delta(10) position. This chain is Fatty acid conjugase FAC2 A, found in Calendula officinalis (Pot marigold).